Reading from the N-terminus, the 153-residue chain is MNSERIIKKYPNRRLYDTEVSRYITLADVRDLVMSGQPFRVLDSANDSDITRSILLQIMLEEETGGQPLFSANMLAQIIRFYGGTLQGTFARYLESSLDLFAKQQQEVTKALTDNPFGTVTRLTQKNVEIWADLQDELMRAAGFPVAPRKKKE.

This is an uncharacterized protein from Allochromatium vinosum (strain ATCC 17899 / DSM 180 / NBRC 103801 / NCIMB 10441 / D) (Chromatium vinosum).